The primary structure comprises 393 residues: Protein TsgA (393 aa).

The next 12 helical transmembrane spans lie at 11–31 (WISF…GMVM), 51–71 (FLNA…EIVP), 78–98 (FGFL…SLAL), 101–121 (TAMF…TFLI), 134–154 (LLFT…IAAF), 162–182 (WYWV…LTFG), 206–226 (IGVL…LGFI), 245–265 (TLVS…SFIL), 273–293 (ILTV…TGTP), 297–317 (AWSI…IITL), 332–352 (FVLT…GPIV), and 361–381 (LLTA…LGFV).

This sequence belongs to the major facilitator superfamily. TsgA family.

The protein resides in the cell inner membrane. This Shigella boydii serotype 4 (strain Sb227) protein is Protein TsgA.